The primary structure comprises 480 residues: RNA-splicing ligase RtcB homolog (480 aa).

The Mn(2+) site is built by aspartate 93, cysteine 96, histidine 202, histidine 234, and histidine 328. Residue 201 to 205 (NHYTE) coordinates GMP. Residues 328–329 (HN), 377–380 (GGTM), serine 384, 403–406 (HGAG), and lysine 479 each bind GMP. Histidine 403 serves as the catalytic GMP-histidine intermediate.

The protein belongs to the RtcB family. Catalytic component of the tRNA-splicing ligase complex. Mn(2+) serves as cofactor.

It catalyses the reaction a 3'-end 3'-phospho-ribonucleotide-RNA + a 5'-end dephospho-ribonucleoside-RNA + GTP = a ribonucleotidyl-ribonucleotide-RNA + GMP + diphosphate. The catalysed reaction is a 3'-end 2',3'-cyclophospho-ribonucleotide-RNA + a 5'-end dephospho-ribonucleoside-RNA + GTP + H2O = a ribonucleotidyl-ribonucleotide-RNA + GMP + diphosphate + H(+). Its function is as follows. Catalytic subunit of the tRNA-splicing ligase complex that acts by directly joining spliced tRNA halves to mature-sized tRNAs by incorporating the precursor-derived splice junction phosphate into the mature tRNA as a canonical 3',5'-phosphodiester. May act as an RNA ligase with broad substrate specificity, and may function toward other RNAs. The sequence is that of RNA-splicing ligase RtcB homolog from Thalassiosira pseudonana (Marine diatom).